A 258-amino-acid chain; its full sequence is Ribosomal RNA small subunit methyltransferase A (258 aa).

6 residues coordinate S-adenosyl-L-methionine: histidine 13, leucine 15, glycine 40, glutamate 61, aspartate 86, and asparagine 106.

It belongs to the class I-like SAM-binding methyltransferase superfamily. rRNA adenine N(6)-methyltransferase family. RsmA subfamily.

It localises to the cytoplasm. It carries out the reaction adenosine(1518)/adenosine(1519) in 16S rRNA + 4 S-adenosyl-L-methionine = N(6)-dimethyladenosine(1518)/N(6)-dimethyladenosine(1519) in 16S rRNA + 4 S-adenosyl-L-homocysteine + 4 H(+). Its function is as follows. Specifically dimethylates two adjacent adenosines (A1518 and A1519) in the loop of a conserved hairpin near the 3'-end of 16S rRNA in the 30S particle. May play a critical role in biogenesis of 30S subunits. This is Ribosomal RNA small subunit methyltransferase A from Coxiella burnetii (strain Dugway 5J108-111).